A 211-amino-acid chain; its full sequence is Probable nicotinate-nucleotide adenylyltransferase (211 aa).

Belongs to the NadD family.

The catalysed reaction is nicotinate beta-D-ribonucleotide + ATP + H(+) = deamido-NAD(+) + diphosphate. The protein operates within cofactor biosynthesis; NAD(+) biosynthesis; deamido-NAD(+) from nicotinate D-ribonucleotide: step 1/1. Its function is as follows. Catalyzes the reversible adenylation of nicotinate mononucleotide (NaMN) to nicotinic acid adenine dinucleotide (NaAD). The chain is Probable nicotinate-nucleotide adenylyltransferase from Legionella pneumophila (strain Paris).